The chain runs to 57 residues: UPF0391 membrane protein Nham_2738 (57 aa).

The next 2 helical transmembrane spans lie at 4-24 (WVVT…GGLA) and 30-50 (IAKI…VVGL).

This sequence belongs to the UPF0391 family.

Its subcellular location is the cell membrane. In Nitrobacter hamburgensis (strain DSM 10229 / NCIMB 13809 / X14), this protein is UPF0391 membrane protein Nham_2738.